Here is a 227-residue protein sequence, read N- to C-terminus: Glutathione S-transferase U27 (227 aa).

The GST N-terminal domain maps to 4–84; it reads EEVVVLNFWP…YIDEVWKDDK (81 aa). Residues 14–15, 41–42, 55–56, and 68–69 each bind glutathione; these read SM, QK, KI, and ES. The GST C-terminal domain maps to 92–217; it reads DPYQKSQCRF…LKIFDRVTQI (126 aa).

This sequence belongs to the GST superfamily. Tau family.

The protein resides in the cytoplasm. It is found in the cytosol. It catalyses the reaction RX + glutathione = an S-substituted glutathione + a halide anion + H(+). May be involved in the conjugation of reduced glutathione to a wide number of exogenous and endogenous hydrophobic electrophiles and have a detoxification role against certain herbicides. This Arabidopsis thaliana (Mouse-ear cress) protein is Glutathione S-transferase U27 (GSTU27).